Here is a 158-residue protein sequence, read N- to C-terminus: Large ribosomal subunit protein uL11 (158 aa).

Residues 1-21 are disordered; it reads MAQSVKTMVEGGKATTGPPIG.

Belongs to the universal ribosomal protein uL11 family. In terms of assembly, part of the ribosomal stalk of the 50S ribosomal subunit. Interacts with L10 and the large rRNA to form the base of the stalk. L10 forms an elongated spine to which L12 dimers bind in a sequential fashion forming a multimeric L10(L12)X complex.

Functionally, forms part of the ribosomal stalk which helps the ribosome interact with GTP-bound translation factors. The polypeptide is Large ribosomal subunit protein uL11 (Thermoplasma volcanium (strain ATCC 51530 / DSM 4299 / JCM 9571 / NBRC 15438 / GSS1)).